A 526-amino-acid polypeptide reads, in one-letter code: Acid-sensing ion channel 1 (526 aa).

The Cytoplasmic portion of the chain corresponds to 1 to 49 (MELKTEEEEVGGVQPVSIQAFASSSTLHGLAHIFSYERLSLKRALWALC). A helical transmembrane segment spans residues 50 to 66 (FLGSLAVLLCVCTERVQ). At 67 to 425 (YYFCYHHVTK…ETIEQKKAYE (359 aa)) the chain is on the extracellular side. 7 disulfide bridges follow: Cys-93–Cys-194, Cys-172–Cys-179, Cys-290–Cys-365, Cys-308–Cys-361, Cys-312–Cys-359, Cys-321–Cys-343, and Cys-323–Cys-335. N-linked (GlcNAc...) asparagine glycosylation is found at Asn-366 and Asn-393. Residues 426 to 456 (IAGLLGDIGGQMGLFIGASILTVLELFDYAY) form a discontinuously helical membrane-spanning segment. The GAS motif; ion selectivity filter signature appears at 442–444 (GAS). Topologically, residues 457–526 (EVIKHRLCRR…ARGTFEDFTC (70 aa)) are cytoplasmic. Ser-477 carries the post-translational modification Phosphoserine; by PKA. Ser-497 carries the post-translational modification Phosphoserine.

Belongs to the amiloride-sensitive sodium channel (TC 1.A.6) family. ASIC1 subfamily. In terms of assembly, homotrimer. Heterotrimer; with other ASIC proteins producing channel with different properties. Interacts with PICK1; regulates ASIC1 clustering in membranes. Interacts with STOM; alters heterotrimeric ASIC channels activity. Post-translationally, pH-gating could be regulated by serine proteases. Phosphorylation by PKA regulates interaction with PICK1 and subcellular localization. Phosphorylation by PKC may regulate the channel. Expressed in brain areas receiving strong excitatory corticofugal input. In hippocampus, expressed in the hilus of the dentate gyrus. In the cerebral cortex expressed in anterior and posterior cingulate cortex, sensory and motor cortices. In the sensory cortex strongest expression is detected in the whisker barrel field. In sensorimotor and cingulate cortex expression is elevated in layer III. Also expressed in basal ganglia, striatum, ventral pallidum, olfactory tubercle, and nucleus accumbens. Weakly expressed in thalamus with the exception of the habenula and the medial septal nuclei. In olfactory bulb, preferentially expressed in the glomerular layer, within glomeruli. Expressed in cerebellum in the molecular and granule cell layers. Strongly expressed in amygdala complex, particularly in the lateral and basolateral nuclei. Isoform 1 is more abundant in brain compared to isoform 2 (at protein level). Expressed in the nodose ganglion and dorsal root ganglion. Expressed in dendritic spine cells.

The protein resides in the cell membrane. It is found in the postsynaptic cell membrane. It localises to the cell projection. The protein localises to the dendrite. It carries out the reaction Na(+)(in) = Na(+)(out). The enzyme catalyses Ca(2+)(in) = Ca(2+)(out). The catalysed reaction is K(+)(in) = K(+)(out). It catalyses the reaction Li(+)(in) = Li(+)(out). Its activity is regulated as follows. Inhibited by the diuretic drug amiloride. The activity of the channel is sensitive to rapid decrease in osmotic pressure. Functionally, forms voltage-independent, pH-gated trimeric sodium channels that act as postsynaptic excitatory receptors in the nervous system, playing a crucial role in regulating synaptic plasticity, learning, and memory. Upon extracellular pH drop this channel elicits transient, fast activating, and completely desensitizing inward currents. Displays high selectivity for sodium ions but can also permit the permeation of other cations. Regulates more or less directly intracellular calcium concentration and CaMKII phosphorylation, and thereby the density of dendritic spines. Modulates neuronal activity in the circuits underlying innate fear. Its function is as follows. Has high selectivity for sodium ions but is also potentially permeable to other cations including potassium. Could function in cochlear mechanoelectrical transduction. This chain is Acid-sensing ion channel 1, found in Mus musculus (Mouse).